The primary structure comprises 963 residues: Low-density lipoprotein receptor-related protein 8 (963 aa).

Positions 1 to 32 are cleaved as a signal peptide; sequence MGLPEPGPLRLLALLLLLLLLLLLQLQHLAAA. At 42-826 the chain is on the extracellular side; that stretch reads GPAKDCEKDQ…SKMGSTVTAA (785 aa). LDL-receptor class A domains lie at 46-82, 85-123, 126-164, 166-202, 205-246, 258-295, and 298-334; these read DCEK…DDCP, TCAD…ATCT, VCPA…AGCA, LCAP…RGCA, ACGP…ELCG, ACAT…ADCP, and TCRG…AGCL. 27 cysteine pairs are disulfide-bonded: Cys-47/Cys-59, Cys-54/Cys-72, Cys-66/Cys-81, Cys-86/Cys-98, Cys-93/Cys-111, Cys-105/Cys-122, Cys-127/Cys-141, Cys-134/Cys-154, Cys-148/Cys-163, Cys-167/Cys-179, Cys-174/Cys-192, Cys-186/Cys-201, Cys-206/Cys-221, Cys-213/Cys-234, Cys-228/Cys-245, Cys-259/Cys-272, Cys-267/Cys-285, Cys-279/Cys-294, Cys-299/Cys-311, Cys-306/Cys-324, Cys-318/Cys-333, Cys-340/Cys-351, Cys-347/Cys-360, Cys-362/Cys-374, Cys-380/Cys-390, Cys-386/Cys-399, and Cys-401/Cys-414. Residues Trp-64, Asp-67, Asp-69, Asp-71, Asp-77, and Glu-78 each coordinate Ca(2+). The N-linked (GlcNAc...) asparagine glycan is linked to Asn-176. Positions 336–375 constitute an EGF-like 1 domain; sequence GLNECLHNNGGCSHICTDLKIGFECTCPAGFQLLDQKTCG. Residues 376–415 enclose the EGF-like 2; calcium-binding domain; it reads DIDECKDPDACSQICVNYKGYFKCECYPGYEMDLLTKNCK. A glycan (N-linked (GlcNAc...) asparagine) is linked at Asn-441. LDL-receptor class B repeat units follow at residues 462–508, 509–551, 552–595, 596–639, and 640–681; these read NRIY…DWVH, KHIY…DPLR, GFMY…DLLS, QRLY…VFED, and KVFW…FHEL. Asn-518 and Asn-538 each carry an N-linked (GlcNAc...) asparagine glycan. Residues 740–798 are clustered O-linked oligosaccharides; sequence STSTTTLASTMTRTVPATTRAPGTTVHRSTYQNHSTETPSLTAAVPSSVSVPRAPSISP. A disordered region spans residues 754–815; the sequence is VPATTRAPGT…SNHSQHYANE (62 aa). Residues 765 to 777 show a composition bias toward polar residues; that stretch reads VHRSTYQNHSTET. N-linked (GlcNAc...) asparagine glycosylation occurs at Asn-772. Low complexity predominate over residues 778 to 799; it reads PSLTAAVPSSVSVPRAPSISPS. The segment covering 800-812 has biased composition (polar residues); it reads TLSPATSNHSQHY. Asn-807 carries N-linked (GlcNAc...) asparagine glycosylation. Residues 827–847 traverse the membrane as a helical segment; that stretch reads VIGIIVPIVVIALLCMSGYLI. Residues 848–963 are Cytoplasmic-facing; it reads WRNWKRKNTK…ALSLEDDGLP (116 aa).

Belongs to the LDLR family. As to quaternary structure, homooligomer. Interacts with VLDLR. Reelin associates with two or more receptor molecules. Interacts with DAB1 and JNK-interacting proteins. Interacts with SNX17. Interacts with PCSK9. Interacts with MDK; this interaction is calcium dependent. Interacts with CLU. (Microbial infection) Interacts with Semliki Forest virus E2-E1 heterodimer; this interaction mediates viral entry to host cell. In terms of assembly, (Microbial infection) Interacts (via class A repeats) with Eastern equine encephalitis virus spike glycoprotein E2; this interaction mediates viral entry into host cell. Post-translationally, O-glycosylated. Some alternatively spliced isoforms lack the O-linked sugar domain. In terms of processing, undergoes sequential, furin and gamma-secretase dependent, proteolytic processing, resulting in the extracellular release of the entire ligand-binding domain as a soluble polypeptide and in the intracellular domain (ICD) release into the cytoplasm. The gamma-secretase-dependent proteolytical processing occurs after the bulk of the extracellular domain has been shed, in a furin-dependent manner, in alternatively spliced isoforms carrying the furin cleavage site. Hypoglycosylation (mainly hypo-O-glycosylation) leads to increased extracellular cleavage, which in turn results in accelerating release of the intracellular domain (ICD) by the gamma-secretase. The resulting receptor fragment is able to inhibit Reelin signaling and in particular the Reelin-induced DAB1 phosphorylation. Tyrosine phosphorylated upon apoE binding. Post-translationally, ubiquitinated by MYLIP leading to degradation. In terms of tissue distribution, expressed mainly in brain and placenta. Also expressed in platelets and megakaryocytic cells. Not expressed in the liver.

It is found in the cell membrane. Its subcellular location is the secreted. Cell surface receptor for Reelin (RELN) and apolipoprotein E (apoE)-containing ligands. LRP8 participates in transmitting the extracellular Reelin signal to intracellular signaling processes, by binding to DAB1 on its cytoplasmic tail. Reelin acts via both the VLDL receptor (VLDLR) and LRP8 to regulate DAB1 tyrosine phosphorylation and microtubule function in neurons. LRP8 has higher affinity for Reelin than VLDLR. LRP8 is thus a key component of the Reelin pathway which governs neuronal layering of the forebrain during embryonic brain development. Binds the endoplasmic reticulum resident receptor-associated protein (RAP). Binds dimers of beta 2-glycoprotein I and may be involved in the suppression of platelet aggregation in the vasculature. Highly expressed in the initial segment of the epididymis, where it affects the functional expression of clusterin and phospholipid hydroperoxide glutathione peroxidase (PHGPx), two proteins required for sperm maturation. May also function as an endocytic receptor. Not required for endocytic uptake of SEPP1 in the kidney which is mediated by LRP2. Together with its ligand, apolipoprotein E (apoE), may indirectly play a role in the suppression of the innate immune response by controlling the survival of myeloid-derived suppressor cells. Functionally, (Microbial infection) Acts as a receptor for Semliki Forest virus. The protein is Low-density lipoprotein receptor-related protein 8 (LRP8) of Homo sapiens (Human).